We begin with the raw amino-acid sequence, 84 residues long: U8-theraphotoxin-Hhn1b (84 aa).

Positions Met-1–Cys-21 are cleaved as a signal peptide. 4 disulfides stabilise this stretch: Cys-23/Cys-35, Cys-29/Cys-44, Cys-34/Cys-67, and Cys-54/Cys-75.

The protein belongs to the AVIT (prokineticin) family. In terms of tissue distribution, expressed by the venom gland.

The protein resides in the secreted. The chain is U8-theraphotoxin-Hhn1b from Cyriopagopus hainanus (Chinese bird spider).